Here is a 512-residue protein sequence, read N- to C-terminus: Activin receptor type-2B (512 aa).

An N-terminal signal peptide occupies residues 1 to 18; sequence MTAPWVALALLWGSLCAG. Residues 19 to 137 lie on the Extracellular side of the membrane; it reads SGRGEAETRE…PPPTAPTLLT (119 aa). Cystine bridges form between C29-C59, C49-C77, C84-C103, C90-C102, and C104-C109. 2 N-linked (GlcNAc...) asparagine glycosylation sites follow: N42 and N65. A helical membrane pass occupies residues 138-158; it reads VLAYSLLPIGGLSLIVLLAFW. Residues 159–512 are Cytoplasmic-facing; the sequence is MYRHRKPPYG…VDLPPKESSI (354 aa). The Protein kinase domain occupies 190 to 480; that stretch reads LQLLEIKARG…AGCVEERVSL (291 aa). ATP is bound by residues 196–204 and K217; that span reads KARGRFGCV. D321 serves as the catalytic Proton acceptor. The segment at 491–512 is interaction with DYNLT1; the sequence is DCLVSLVTSVTNVDLPPKESSI.

This sequence belongs to the protein kinase superfamily. TKL Ser/Thr protein kinase family. TGFB receptor subfamily. Forms an activin receptor complex with activin type II receptors such as ACVR1B. Interacts with VPS39. Interacts with DYNLT1. Interacts with BMP3. Interacts with BMP2. Interacts with BMP6. It depends on Mg(2+) as a cofactor. Mn(2+) is required as a cofactor. Phosphorylated. Constitutive phosphorylation is in part catalyzed by its own kinase activity.

The protein resides in the cell membrane. The enzyme catalyses L-threonyl-[receptor-protein] + ATP = O-phospho-L-threonyl-[receptor-protein] + ADP + H(+). The catalysed reaction is L-seryl-[receptor-protein] + ATP = O-phospho-L-seryl-[receptor-protein] + ADP + H(+). Transmembrane serine/threonine kinase activin type-2 receptor forming an activin receptor complex with activin type-1 serine/threonine kinase receptors (ACVR1, ACVR1B or ACVR1c). Transduces the activin signal from the cell surface to the cytoplasm and is thus regulating many physiological and pathological processes including neuronal differentiation and neuronal survival, hair follicle development and cycling, FSH production by the pituitary gland, wound healing, extracellular matrix production, immunosuppression and carcinogenesis. Activin is also thought to have a paracrine or autocrine role in follicular development in the ovary. Within the receptor complex, the type-2 receptors act as a primary activin receptors (binds activin-A/INHBA, activin-B/INHBB as well as inhibin-A/INHA-INHBA). The type-1 receptors like ACVR1B act as downstream transducers of activin signals. Activin binds to type-2 receptor at the plasma membrane and activates its serine-threonine kinase. The activated receptor type-2 then phosphorylates and activates the type-1 receptor. Once activated, the type-1 receptor binds and phosphorylates the SMAD proteins SMAD2 and SMAD3, on serine residues of the C-terminal tail. Soon after their association with the activin receptor and subsequent phosphorylation, SMAD2 and SMAD3 are released into the cytoplasm where they interact with the common partner SMAD4. This SMAD complex translocates into the nucleus where it mediates activin-induced transcription. Inhibitory SMAD7, which is recruited to ACVR1B through FKBP1A, can prevent the association of SMAD2 and SMAD3 with the activin receptor complex, thereby blocking the activin signal. Activin signal transduction is also antagonized by the binding to the receptor of inhibin-B via the IGSF1 inhibin coreceptor. The polypeptide is Activin receptor type-2B (ACVR2B) (Homo sapiens (Human)).